Here is a 428-residue protein sequence, read N- to C-terminus: 3-phosphoshikimate 1-carboxyvinyltransferase (428 aa).

3 residues coordinate 3-phosphoshikimate: lysine 21, serine 22, and arginine 26. Lysine 21 lines the phosphoenolpyruvate pocket. Glycine 91 and arginine 119 together coordinate phosphoenolpyruvate. Residues serine 164, glutamine 166, aspartate 313, and lysine 340 each coordinate 3-phosphoshikimate. A phosphoenolpyruvate-binding site is contributed by glutamine 166. Catalysis depends on aspartate 313, which acts as the Proton acceptor. Positions 344 and 386 each coordinate phosphoenolpyruvate.

It belongs to the EPSP synthase family. As to quaternary structure, monomer.

It localises to the cytoplasm. It catalyses the reaction 3-phosphoshikimate + phosphoenolpyruvate = 5-O-(1-carboxyvinyl)-3-phosphoshikimate + phosphate. Its pathway is metabolic intermediate biosynthesis; chorismate biosynthesis; chorismate from D-erythrose 4-phosphate and phosphoenolpyruvate: step 6/7. Functionally, catalyzes the transfer of the enolpyruvyl moiety of phosphoenolpyruvate (PEP) to the 5-hydroxyl of shikimate-3-phosphate (S3P) to produce enolpyruvyl shikimate-3-phosphate and inorganic phosphate. This chain is 3-phosphoshikimate 1-carboxyvinyltransferase, found in Campylobacter jejuni subsp. jejuni serotype O:2 (strain ATCC 700819 / NCTC 11168).